The primary structure comprises 739 residues: Nucleoprotein (739 aa).

Residues 334 to 363 (VNVGEQYQQLREAATEAEKQLQQYAESREL) are a coiled coil. Disordered regions lie at residues 414-475 (RPNL…YHDD) and 498-642 (FELQ…IGQS). Residues 570–579 (TPIDQGDDDP) show a composition bias toward acidic residues. The span at 614 to 624 (AEAHEPPHKSS) shows a compositional bias: basic and acidic residues. Polar residues predominate over residues 625-634 (NEPAETSQLN).

The protein belongs to the filoviruses nucleoprotein family. In terms of assembly, homooligomer. Homomultimerizes to form the nucleocapsid. Binds to viral genomic RNA. Interacts with VP35 and VP30 to form the nucleocapsid. Interacts with host PPP2R5C; this interaction leads to VP30 dephosphorylation and viral transcription. Interacts with VP24; this interaction facilitates nucleocapsid assembly and genome packaging. Interacts with matrix protein VP40; this interaction allows recruitment of the nucleocapsid into progeny virions. Interacts with host STAU1. Interacts with host NXF1 (via RNA-binding domain); this interaction recruits NXF1 to the inclusion bodies were viral replication takes place, probably to export viral mRNA-NXF1 complexes from these sites. Interacts with host CCDC92; this interaction sequesters NP in the host cytoplasm. Interacts with host TRIM14. Phosphorylated and O-glycosylated by host. Acetylated by host EP300 in vitro.

It is found in the virion. It localises to the host cytoplasm. Oligomerizes into helical capsid to encapsidate the viral genome, protecting it from nucleases and the cellular innate immune response. VP35 binds to and stabilizes monomeric NP, keeping it soluble. Upon virus replication, NP is recruited to bind cooperatively viral genomic RNA and VP35 is released. The encapsidated genomic RNA is termed the nucleocapsid and serves as template for transcription and replication. The nucleocapsid is helical with a pitch of 10.81 NP per turn and a diameter of about 22nm. Each NP binds to six nucleotides of viral genomic RNA, three being exposed to the solvant and three hidden into the nucleocapsid. Also recruits host PPP2R5C phosphatase to dephosphorylate VP30 and thereby promote viral transcription. Upon virion assembly and budding, NP binds to VP24 and possibly host STAU1. The sequence is that of Nucleoprotein (NP) from Homo sapiens (Human).